Consider the following 147-residue polypeptide: Small ribosomal subunit protein uS12 (147 aa).

The protein belongs to the universal ribosomal protein uS12 family. Part of the 30S ribosomal subunit.

Its function is as follows. With S4 and S5 plays an important role in translational accuracy. Located at the interface of the 30S and 50S subunits. The polypeptide is Small ribosomal subunit protein uS12 (Thermococcus celer).